A 39-amino-acid polypeptide reads, in one-letter code: Cytochrome b6-f complex subunit 5 (39 aa).

A helical transmembrane segment spans residues 5 to 25; that stretch reads LLCGIVLGLVPITLLGLFVAA.

It belongs to the PetG family. The 4 large subunits of the cytochrome b6-f complex are cytochrome b6, subunit IV (17 kDa polypeptide, PetD), cytochrome f and the Rieske protein, while the 4 small subunits are PetG, PetL, PetM and PetN. The complex functions as a dimer.

Its subcellular location is the cellular thylakoid membrane. Component of the cytochrome b6-f complex, which mediates electron transfer between photosystem II (PSII) and photosystem I (PSI), cyclic electron flow around PSI, and state transitions. PetG is required for either the stability or assembly of the cytochrome b6-f complex. The chain is Cytochrome b6-f complex subunit 5 from Prochlorococcus marinus (strain SARG / CCMP1375 / SS120).